A 49-amino-acid polypeptide reads, in one-letter code: Protein OPG059 (49 aa).

Position 1 (methionine 1) is a topological domain, virion surface. Residues 2–22 (VIGLVIFVSVAAAIVGVLSNV) traverse the membrane as a helical segment. Topologically, residues 23-49 (LDMLMYVEENNEEDARIKEEQELLLLY) are intravirion.

This sequence belongs to the orthopoxvirus OPG058 family.

It is found in the virion membrane. The protein localises to the host membrane. May play a role in cell adhesion and is important for virus virulence in vivo, although it is not required for the virus life cycle in cell cultures. In Vaccinia virus (strain Western Reserve) (VACV), this protein is Protein OPG059 (OPG059).